The sequence spans 396 residues: NADH-quinone oxidoreductase subunit D (396 aa).

This sequence belongs to the complex I 49 kDa subunit family. As to quaternary structure, NDH-1 is composed of 14 different subunits. Subunits NuoB, C, D, E, F, and G constitute the peripheral sector of the complex.

It is found in the cell inner membrane. It catalyses the reaction a quinone + NADH + 5 H(+)(in) = a quinol + NAD(+) + 4 H(+)(out). NDH-1 shuttles electrons from NADH, via FMN and iron-sulfur (Fe-S) centers, to quinones in the respiratory chain. The immediate electron acceptor for the enzyme in this species is believed to be ubiquinone. Couples the redox reaction to proton translocation (for every two electrons transferred, four hydrogen ions are translocated across the cytoplasmic membrane), and thus conserves the redox energy in a proton gradient. This Agrobacterium fabrum (strain C58 / ATCC 33970) (Agrobacterium tumefaciens (strain C58)) protein is NADH-quinone oxidoreductase subunit D.